The sequence spans 710 residues: Forkhead box protein P2 (710 aa).

Residues 1–28 (MMQESATETISNSSMNQNGMSTLSSQLD) show a composition bias toward polar residues. Disordered regions lie at residues 1–44 (MMQE…SSEV) and 272–334 (HSQE…TGAS). Residues 273–283 (SQEDNGIKHGG) are compositionally biased toward basic and acidic residues. Low complexity predominate over residues 287–300 (TTNNSSSTTSSTTS). Over residues 310–319 (SIVNGQSSVL) the composition is skewed to polar residues. Positions 321–332 (ARRDSSSHEETG) are enriched in basic and acidic residues. Residues 343-366 (CKWPGCESICEDFGQFLKHLNNEH) form a C2H2-type zinc finger. The tract at residues 383 to 404 (VQQLEIQLSKERERLQAMMTHL) is leucine-zipper. A CTBP1-binding region spans residues 417 to 421 (PLNLV). Residues 433 to 454 (TSPQSLPQTPTTPTAPVTPITQ) are compositionally biased toward low complexity. The disordered stretch occupies residues 433–460 (TSPQSLPQTPTTPTAPVTPITQGPSVIT). Residues 499–589 (RPPFTYATLI…SQKITGSPTL (91 aa)) constitute a DNA-binding region (fork-head). Disordered regions lie at residues 644 to 663 (LDHI…QPHI) and 673 to 710 (VIAE…EDLE). A compositionally biased stretch (acidic residues) spans 694–710 (LEDDREIEEEPLSEDLE).

Forms homodimers and heterodimers with FOXP1 and FOXP4. Dimerization is required for DNA-binding. Interacts with CTBP1. Interacts with FOXP1. Interacts with TBR1. Interacts with ZMYM2.

It is found in the nucleus. Transcriptional repressor that may play a role in the specification and differentiation of lung epithelium. May also play a role in developing neural, gastrointestinal and cardiovascular tissues. Can act with CTBP1 to synergistically repress transcription but CTPBP1 is not essential. Plays a role in synapse formation by regulating SRPX2 levels. This Rattus norvegicus (Rat) protein is Forkhead box protein P2 (Foxp2).